The chain runs to 783 residues: Rabenosyn-5 (783 aa).

N-acetylalanine is present on alanine 2. Serine 3 is subject to Phosphoserine. The segment at 14-37 adopts a C2H2-type zinc-finger fold; the sequence is FLCPLCLKDLQSFYQLQSHYEEEH. The segment at 99–262 is necessary for the correct targeting to endosomes; that stretch reads RSHLSDFKKH…HCKDKLLKRE (164 aa). The FYVE-type zinc finger occupies 156-259; sequence DQDVPFCPDC…CCTHCKDKLL (104 aa). Zn(2+) is bound by residues cysteine 162, cysteine 165, cysteine 178, cysteine 181, cysteine 186, and cysteine 189. Positions 206-223 are enriched in polar residues; sequence KDSLSTHTSPSQSPNSVH. The tract at residues 206–240 is disordered; sequence KDSLSTHTSPSQSPNSVHGSRRGSISSMSSVSSVL. Phosphoserine is present on residues serine 214, serine 218, serine 225, and serine 229. Residues 227–239 are compositionally biased toward low complexity; the sequence is RGSISSMSSVSSV. Zn(2+) contacts are provided by cysteine 251 and cysteine 254. The necessary for interaction with RAB4A stretch occupies residues 263-499; it reads QQMDEKEHTP…QLQDEYDQQQ (237 aa). The interval 263-783 is necessary for interaction with EHD1; that stretch reads QQMDEKEHTP…TLAKQKGAPN (521 aa). Coiled coils occupy residues 377 to 412 and 471 to 531; these read TKEQFEELKKKRKQDLEQKRTVERQAALESRRKLEE and QAKA…ELER. Basic and acidic residues-rich tracts occupy residues 387-399 and 405-414; these read KRKQDLEQKRTVE and ESRRKLEERQ. The interval 387 to 433 is disordered; it reads KRKQDLEQKRTVERQAALESRRKLEERQSGLASHTANGDVRSLRGIP. In terms of domain architecture, UIM spans 495–514; that stretch reads YDQQQTEKAIELSRKQAEEE. Disordered stretches follow at residues 569–638 and 663–733; these read SYSL…SPTE and FEED…EEHI. 2 stretches are compositionally biased toward polar residues: residues 571–584 and 610–623; these read SLDQDSSPVQSSTA and TLPQSTMSQQSDKA. Residues 627-783 form a necessary for interaction with RAB5A region; sequence PFDEDDLSSP…TLAKQKGAPN (157 aa). Positions 663 to 673 are enriched in acidic residues; sequence FEEDAEEEEVA. Residue serine 686 is modified to Phosphoserine. The span at 721 to 733 shows a compositional bias: acidic residues; the sequence is VDSDSGMEAEEHI.

In terms of assembly, interacts with EHD1, RAB4A, RAB5A, RAB22A, RAB24 and VPS45. Binds simultaneously to RAB4A and RAB5A in vitro. Interacts with RAB4A and RAB5A that has been activated by GTP binding.

It is found in the cell membrane. Its subcellular location is the early endosome membrane. Functionally, rab4/Rab5 effector protein acting in early endocytic membrane fusion and membrane trafficking of recycling endosomes. Required for endosome fusion either homotypically or with clathrin coated vesicles. Plays a role in the lysosomal trafficking of CTSD/cathepsin D from the Golgi to lysosomes. Also promotes the recycling of transferrin directly from early endosomes to the plasma membrane. Binds phospholipid vesicles containing phosphatidylinositol 3-phosphate (PtdInsP3). Plays a role in the recycling of transferrin receptor to the plasma membrane. This chain is Rabenosyn-5, found in Mus musculus (Mouse).